The sequence spans 106 residues: Large ribosomal subunit protein bL21c (106 aa).

Belongs to the bacterial ribosomal protein bL21 family. Part of the 50S ribosomal subunit.

The protein resides in the plastid. Its subcellular location is the chloroplast. In terms of biological role, this protein binds to 23S rRNA. This chain is Large ribosomal subunit protein bL21c, found in Gracilaria tenuistipitata var. liui (Red alga).